The sequence spans 277 residues: Zinc transporter ZupT (277 aa).

A run of 8 helical transmembrane segments spans residues 7-27 (VLLAFGLTLFAGLATGVGSAI), 38-58 (FLAVALGFSAGVMIYVSFVEI), 73-93 (VLASWYTVAAFFSGALLIAVI), 133-155 (AGVLAAVAIGIHNFPEGLAAFSA), 165-187 (AIAVAIAIHNIPEGMAVSVPIYY), 196-216 (FLYSFLSGVSEPIGALVGYVV), 220-240 (FFTPMVFGLLFASVAGIMVYI), and 257-277 (LCILGVFSGMGVMALSLLLFL). The Fe(2+) site is built by N145 and E148. Zn(2+) is bound by residues E148 and H173. Residues N174, E177, and E206 each coordinate Fe(2+). E177 serves as a coordination point for Zn(2+).

It belongs to the ZIP transporter (TC 2.A.5) family. ZupT subfamily.

It is found in the cell inner membrane. It catalyses the reaction Zn(2+)(in) = Zn(2+)(out). Functionally, mediates zinc uptake. May also transport other divalent cations. This chain is Zinc transporter ZupT, found in Nitratidesulfovibrio vulgaris (strain ATCC 29579 / DSM 644 / CCUG 34227 / NCIMB 8303 / VKM B-1760 / Hildenborough) (Desulfovibrio vulgaris).